Here is a 70-residue protein sequence, read N- to C-terminus: Protein SlyX homolog (70 aa).

It belongs to the SlyX family.

This Rhizobium meliloti (strain 1021) (Ensifer meliloti) protein is Protein SlyX homolog.